A 158-amino-acid chain; its full sequence is NAD(P)H-quinone oxidoreductase subunit J, chloroplastic (158 aa).

The protein belongs to the complex I 30 kDa subunit family. NDH is composed of at least 16 different subunits, 5 of which are encoded in the nucleus.

The protein localises to the plastid. It localises to the chloroplast thylakoid membrane. The enzyme catalyses a plastoquinone + NADH + (n+1) H(+)(in) = a plastoquinol + NAD(+) + n H(+)(out). It carries out the reaction a plastoquinone + NADPH + (n+1) H(+)(in) = a plastoquinol + NADP(+) + n H(+)(out). Its function is as follows. NDH shuttles electrons from NAD(P)H:plastoquinone, via FMN and iron-sulfur (Fe-S) centers, to quinones in the photosynthetic chain and possibly in a chloroplast respiratory chain. The immediate electron acceptor for the enzyme in this species is believed to be plastoquinone. Couples the redox reaction to proton translocation, and thus conserves the redox energy in a proton gradient. In Solanum bulbocastanum (Wild potato), this protein is NAD(P)H-quinone oxidoreductase subunit J, chloroplastic.